Reading from the N-terminus, the 379-residue chain is Lipid-A-disaccharide synthase (379 aa).

This sequence belongs to the LpxB family.

It carries out the reaction a lipid X + a UDP-2-N,3-O-bis[(3R)-3-hydroxyacyl]-alpha-D-glucosamine = a lipid A disaccharide + UDP + H(+). It participates in bacterial outer membrane biogenesis; LPS lipid A biosynthesis. Functionally, condensation of UDP-2,3-diacylglucosamine and 2,3-diacylglucosamine-1-phosphate to form lipid A disaccharide, a precursor of lipid A, a phosphorylated glycolipid that anchors the lipopolysaccharide to the outer membrane of the cell. The sequence is that of Lipid-A-disaccharide synthase from Persephonella marina (strain DSM 14350 / EX-H1).